The following is a 342-amino-acid chain: A-type ATP synthase subunit C (342 aa).

The protein belongs to the V-ATPase V0D/AC39 subunit family. As to quaternary structure, has multiple subunits with at least A(3), B(3), C, D, E, F, H, I and proteolipid K(x).

The protein resides in the cell membrane. Component of the A-type ATP synthase that produces ATP from ADP in the presence of a proton gradient across the membrane. This chain is A-type ATP synthase subunit C, found in Archaeoglobus fulgidus (strain ATCC 49558 / DSM 4304 / JCM 9628 / NBRC 100126 / VC-16).